Here is a 387-residue protein sequence, read N- to C-terminus: MTVLKMTDLDLQGKRVLIREDLNVPVKDGVVTSDARILASLPTIKLALEKGAAVMVCSHLGRPTEGEFSAENSLKPVAEYLSKALGRDVPLVADYLGGVDVKAGDIVLFENVRFNKGEKKNSDELAQQYAALCDVFVMDAFGTAHRAEGSTHGVAKFAKVAAAGPLLAAELDALGKALGAPAQPMAAIVAGSKVSTKLDVLNSLSQICNQLIVGGGIANTFLAAAGHPVGKSLYEPDLLDTARAIAAKVSVPLPVDVVVAKEFAESAEATVKLIADVADDDMILDIGPQTAANFAELLKASQTILWNGPVGVFEFDQFGNGTKVLAKAIAESSAFSIAGGGDTLAAIDKYGVADQISYISTGGGAFLEFVEGKVLPAVEVLETRAKG.

Residues 21–23 (DLN), arginine 36, 59–62 (HLGR), arginine 113, and arginine 146 contribute to the substrate site. ATP contacts are provided by residues lysine 197, glutamate 314, and 340-343 (GGDT).

Belongs to the phosphoglycerate kinase family. Monomer.

The protein localises to the cytoplasm. It catalyses the reaction (2R)-3-phosphoglycerate + ATP = (2R)-3-phospho-glyceroyl phosphate + ADP. It functions in the pathway carbohydrate degradation; glycolysis; pyruvate from D-glyceraldehyde 3-phosphate: step 2/5. This is Phosphoglycerate kinase from Pseudomonas fluorescens (strain SBW25).